We begin with the raw amino-acid sequence, 467 residues long: ATP synthase subunit beta (467 aa).

Residue Gly157–Thr164 participates in ATP binding.

It belongs to the ATPase alpha/beta chains family. As to quaternary structure, F-type ATPases have 2 components, CF(1) - the catalytic core - and CF(0) - the membrane proton channel. CF(1) has five subunits: alpha(3), beta(3), gamma(1), delta(1), epsilon(1). CF(0) has three main subunits: a(1), b(2) and c(9-12). The alpha and beta chains form an alternating ring which encloses part of the gamma chain. CF(1) is attached to CF(0) by a central stalk formed by the gamma and epsilon chains, while a peripheral stalk is formed by the delta and b chains.

Its subcellular location is the cell inner membrane. The catalysed reaction is ATP + H2O + 4 H(+)(in) = ADP + phosphate + 5 H(+)(out). Functionally, produces ATP from ADP in the presence of a proton gradient across the membrane. The catalytic sites are hosted primarily by the beta subunits. This Desulfosudis oleivorans (strain DSM 6200 / JCM 39069 / Hxd3) (Desulfococcus oleovorans) protein is ATP synthase subunit beta.